A 116-amino-acid polypeptide reads, in one-letter code: Protein Rev (116 aa).

Residues Ser5 and Ser8 each carry the phosphoserine; by host CK2 modification. The homomultimerization stretch occupies residues 18–26; that stretch reads IIKHLYQSN. The segment at 20 to 48 is disordered; it reads KHLYQSNPPPKPEGTRQARRNRRRRWRER. The Nuclear localization signal and RNA-binding (RRE) motif lies at 34–50; that stretch reads TRQARRNRRRRWRERQR. A compositionally biased stretch (basic residues) spans 36-48; that stretch reads QARRNRRRRWRER. The short motif at 73-84 is the Nuclear export signal and binding to XPO1 element; it reads LQLPPLERLTLD. Positions 91 to 116 are disordered; that stretch reads TSGTQGVGSPQILVESPAVLESGTKE. Ser92 and Ser99 each carry phosphoserine; by host.

The protein belongs to the HIV-1 REV protein family. In terms of assembly, homomultimer; when bound to the RRE. Multimeric assembly is essential for activity and may involve XPO1. Binds to human KPNB1, XPO1, TNPO1, RANBP5 and IPO7. Interacts with the viral Integrase. Interacts with human KHDRBS1. Interacts with human NAP1; this interaction decreases Rev multimerization and stimulates its activity. Interacts with human DEAD-box helicases DDX3 and DDX24; these interactions may serve for viral RNA export to the cytoplasm and packaging, respectively. Interacts with human PSIP1; this interaction may inhibit HIV-1 DNA integration by promoting dissociation of the Integrase-LEDGF/p75 complex. Post-translationally, asymmetrically arginine dimethylated at one site by host PRMT6. Methylation impairs the RNA-binding activity and export of viral RNA from the nucleus to the cytoplasm. In terms of processing, phosphorylated by protein kinase CK2. Presence of, and maybe binding to the N-terminus of the regulatory beta subunit of CK2 is necessary for CK2-mediated Rev's phosphorylation.

It localises to the host nucleus. It is found in the host nucleolus. The protein localises to the host cytoplasm. Its function is as follows. Escorts unspliced or incompletely spliced viral pre-mRNAs (late transcripts) out of the nucleus of infected cells. These pre-mRNAs carry a recognition sequence called Rev responsive element (RRE) located in the env gene, that is not present in fully spliced viral mRNAs (early transcripts). This function is essential since most viral proteins are translated from unspliced or partially spliced pre-mRNAs which cannot exit the nucleus by the pathway used by fully processed cellular mRNAs. Rev itself is translated from a fully spliced mRNA that readily exits the nucleus. Rev's nuclear localization signal (NLS) binds directly to KPNB1/Importin beta-1 without previous binding to KPNA1/Importin alpha-1. KPNB1 binds to the GDP bound form of RAN (Ran-GDP) and targets Rev to the nucleus. In the nucleus, the conversion from Ran-GDP to Ran-GTP dissociates Rev from KPNB1 and allows Rev's binding to the RRE in viral pre-mRNAs. Rev multimerization on the RRE via cooperative assembly exposes its nuclear export signal (NES) to the surface. Rev can then form a complex with XPO1/CRM1 and Ran-GTP, leading to nuclear export of the complex. Conversion from Ran-GTP to Ran-GDP mediates dissociation of the Rev/RRE/XPO1/RAN complex, so that Rev can return to the nucleus for a subsequent round of export. Beside KPNB1, also seems to interact with TNPO1/Transportin-1, RANBP5/IPO5 and IPO7/RANBP7 for nuclear import. The nucleoporin-like HRB/RIP is an essential cofactor that probably indirectly interacts with Rev to release HIV RNAs from the perinuclear region to the cytoplasm. This Human immunodeficiency virus type 1 group M subtype B (isolate CDC-451) (HIV-1) protein is Protein Rev.